The chain runs to 275 residues: Anthracycline biosynthesis protein DauV (275 aa).

2 VOC domains span residues 8–136 (APAW…VWRK) and 150–263 (SVGW…VVEL).

Its pathway is antibiotic biosynthesis; daunorubicin biosynthesis. The protein operates within antibiotic biosynthesis; carminomycin biosynthesis. Functionally, involved in the biosynthesis of the anthracyclines carminomycin and daunorubicin (daunomycin) which are aromatic polyketide antibiotics that exhibit high cytotoxicity and are widely applied in the chemotherapy of a variety of cancers. Acts jointly with DoxA in the conversion of 13-deoxycarminomycin and 13-deoxydaunorubicin to yield carminomycin and daunorubicin, respectively. The protein is Anthracycline biosynthesis protein DauV (dauV) of Streptomyces sp. (strain C5).